The primary structure comprises 66 residues: Large ribosomal subunit protein bL33c (66 aa).

Belongs to the bacterial ribosomal protein bL33 family.

The protein resides in the plastid. Its subcellular location is the chloroplast. The polypeptide is Large ribosomal subunit protein bL33c (Oryza nivara (Indian wild rice)).